Consider the following 383-residue polypeptide: Probable L-tyrosine/L-aspartate decarboxylase (383 aa).

Residue Lys-227 is modified to N6-(pyridoxal phosphate)lysine.

Belongs to the group II decarboxylase family. MfnA subfamily. It depends on pyridoxal 5'-phosphate as a cofactor.

It carries out the reaction L-tyrosine + H(+) = tyramine + CO2. The catalysed reaction is L-aspartate + H(+) = beta-alanine + CO2. The protein operates within cofactor biosynthesis; methanofuran biosynthesis. It functions in the pathway cofactor biosynthesis; coenzyme A biosynthesis. In terms of biological role, catalyzes the decarboxylation of L-tyrosine to produce tyramine for methanofuran biosynthesis. Can also catalyze the decarboxylation of L-aspartate to produce beta-alanine for coenzyme A (CoA) biosynthesis. In Methanothrix thermoacetophila (strain DSM 6194 / JCM 14653 / NBRC 101360 / PT) (Methanosaeta thermophila), this protein is Probable L-tyrosine/L-aspartate decarboxylase.